The sequence spans 247 residues: Protein At-4/1 (247 aa).

Coiled-coil stretches lie at residues 39–126 (VESS…YKIR) and 182–247 (LLME…LSSS).

Interacts with viral tomato spotted wilt virus (TSWV) movement protein NSM, which is involved in cell-to cell spread of viral genome and enlargement of the host plasmodesmata size exclusion limit (SEL). Expressed in leaves (at protein level).

Its subcellular location is the endoplasmic reticulum. It is found in the cell junction. The protein resides in the plasmodesma. Functionally, involved in intra- and inter-cellular trafficking through plasmodesmata (PD). The protein is Protein At-4/1 of Arabidopsis thaliana (Mouse-ear cress).